The chain runs to 360 residues: Cyclin-dependent kinase 10 (360 aa).

A Protein kinase domain is found at 39 to 323 (FEKLNRIGEG…AGDCLESSYF (285 aa)). ATP is bound by residues 45-53 (IGEGTYGIV) and K68. D163 serves as the catalytic Proton acceptor. T196 is subject to Phosphothreonine. The disordered stretch occupies residues 334–360 (LMPTFPHHRNKRAAPATSEGQSKRCKP).

The protein belongs to the protein kinase superfamily. CMGC Ser/Thr protein kinase family. CDC2/CDKX subfamily. As to quaternary structure, heterodimer with CCNQ, the interaction is required for kinase activity. Interacts with ETS2. Interacts with PRK2.

Its subcellular location is the cytoplasm. The protein localises to the cytoskeleton. It is found in the cilium basal body. The enzyme catalyses L-seryl-[protein] + ATP = O-phospho-L-seryl-[protein] + ADP + H(+). It carries out the reaction L-threonyl-[protein] + ATP = O-phospho-L-threonyl-[protein] + ADP + H(+). In terms of biological role, cyclin-dependent kinase that phosphorylates the transcription factor ETS2 (in vitro) and positively controls its proteasomal degradation (in cells). Involved in the regulation of actin cytoskeleton organization through the phosphorylation of actin dynamics regulators such as PKN2. Is a negative regulator of ciliogenesis through phosphorylation of PKN2 and promotion of RhoA signaling. In Homo sapiens (Human), this protein is Cyclin-dependent kinase 10 (CDK10).